The primary structure comprises 149 residues: MAGYGAKGIRKVGAFRSGLEDKVSKQLESKGIKFEYEEWKVPYVIPASNHTYTPDFLLPNGIFVETKGLWESDDRKKHLLIREQHPELDIRIVFSSSRTKLYKGSPTSYGEFCEKHGIKFADKLIPAEWIKEPKKEVPFDRLKRKGGKK.

In terms of assembly, homodimer.

It carries out the reaction Endonucleolytic cleavage to 5'-phosphooligonucleotide end-products.. Functionally, junction-resolving enzyme that selectively binds and cleaves four-way (Holliday) DNA junctions present after viral genomic replication. These intermediates are created during DNA repair, processing of stalled replication forks and homologous genetic recombination. Introduces two nicks on the two non-crossing strands, at 5' sides of the junction. Also participates together with gp6 in the degradation of host chromosome to provide nucleotides for phage DNA synthesis. The sequence is that of Endonuclease I from Escherichia coli (Bacteriophage T7).